Reading from the N-terminus, the 948-residue chain is RNA polymerase-associated protein RapA (948 aa).

In terms of domain architecture, Helicase ATP-binding spans 164 to 332; that stretch reads EVADRIAPRV…FARLRLLDPN (169 aa). Position 177 to 184 (177 to 184) interacts with ATP; that stretch reads DEVGLGKT. Positions 278-281 match the DEAH box motif; it reads DEAH. The Helicase C-terminal domain maps to 473 to 627; it reads RVDWLIDTLK…TCPTGNALQH (155 aa).

The protein belongs to the SNF2/RAD54 helicase family. RapA subfamily. In terms of assembly, interacts with the RNAP. Has a higher affinity for the core RNAP than for the holoenzyme. Its ATPase activity is stimulated by binding to RNAP.

In terms of biological role, transcription regulator that activates transcription by stimulating RNA polymerase (RNAP) recycling in case of stress conditions such as supercoiled DNA or high salt concentrations. Probably acts by releasing the RNAP, when it is trapped or immobilized on tightly supercoiled DNA. Does not activate transcription on linear DNA. Probably not involved in DNA repair. This chain is RNA polymerase-associated protein RapA, found in Pseudomonas savastanoi pv. phaseolicola (strain 1448A / Race 6) (Pseudomonas syringae pv. phaseolicola (strain 1448A / Race 6)).